Consider the following 439-residue polypeptide: Ribosomal protein uS12 methylthiotransferase RimO (439 aa).

An MTTase N-terminal domain is found at 3–113; that stretch reads HKVGFVSLGC…VVNAVHQHLP (111 aa). [4Fe-4S] cluster-binding residues include C12, C48, C77, C144, C148, and C151. Positions 130–367 constitute a Radical SAM core domain; sequence LTPRHYAYLK…MQVQAEISRN (238 aa). The TRAM domain maps to 370–436; that stretch reads KNKIGSTQTV…DYDLYGDLEY (67 aa).

Belongs to the methylthiotransferase family. RimO subfamily. Requires [4Fe-4S] cluster as cofactor.

It localises to the cytoplasm. The enzyme catalyses L-aspartate(89)-[ribosomal protein uS12]-hydrogen + (sulfur carrier)-SH + AH2 + 2 S-adenosyl-L-methionine = 3-methylsulfanyl-L-aspartate(89)-[ribosomal protein uS12]-hydrogen + (sulfur carrier)-H + 5'-deoxyadenosine + L-methionine + A + S-adenosyl-L-homocysteine + 2 H(+). Its function is as follows. Catalyzes the methylthiolation of an aspartic acid residue of ribosomal protein uS12. The protein is Ribosomal protein uS12 methylthiotransferase RimO of Legionella pneumophila (strain Corby).